Here is a 132-residue protein sequence, read N- to C-terminus: Small ribosomal subunit protein uS8 (132 aa).

This sequence belongs to the universal ribosomal protein uS8 family. In terms of assembly, part of the 30S ribosomal subunit. Contacts proteins S5 and S12.

Functionally, one of the primary rRNA binding proteins, it binds directly to 16S rRNA central domain where it helps coordinate assembly of the platform of the 30S subunit. The sequence is that of Small ribosomal subunit protein uS8 from Brevibacillus brevis (strain 47 / JCM 6285 / NBRC 100599).